We begin with the raw amino-acid sequence, 432 residues long: Testis-specific Y-encoded-like protein 1 (432 aa).

3 disordered regions span residues 1–31 (MSGR…PDPS), 54–110 (ALPP…LETA), and 116–135 (TDDS…LSRE). A Glycyl lysine isopeptide (Lys-Gly) (interchain with G-Cter in SUMO2) cross-link involves residue K160.

This sequence belongs to the nucleosome assembly protein (NAP) family. Ubiquitinated by the CRL2(APPBP2) complex, which recognizes the Arg-Xaa-Xaa-Gly sequence at the C-terminus, leading to its degradation.

The protein localises to the nucleus. The protein resides in the nucleolus. This is Testis-specific Y-encoded-like protein 1 (TSPYL1) from Bos taurus (Bovine).